The chain runs to 340 residues: Putative 2-hydroxyacid dehydrogenase C1773.17c (340 aa).

NAD(+) is bound by residues 169-170 (AI), 249-251 (TAR), and D275. R251 is a catalytic residue. E280 is an active-site residue. The active-site Proton donor is the H298. 298–301 (HCGV) contacts NAD(+).

The protein belongs to the D-isomer specific 2-hydroxyacid dehydrogenase family.

The chain is Putative 2-hydroxyacid dehydrogenase C1773.17c from Schizosaccharomyces pombe (strain 972 / ATCC 24843) (Fission yeast).